The following is a 387-amino-acid chain: Pepsin II-1 (387 aa).

The first 15 residues, 1–15 (MKWLLLLGLLALSEC), serve as a signal peptide directing secretion. Residues 16 to 59 (IVHKVPLVRKKSLRKNLIEKGLLQDYLKTHTPNLATKYFPKETF) constitute a propeptide, activation peptide. The Peptidase A1 domain occupies 75–384 (YFGTISIGTP…DRANNQVGLA (310 aa)). Asp-93 is a catalytic residue. Cys-106 and Cys-111 are disulfide-bonded. Position 129 is a phosphoserine (Ser-129). A disulfide bridge links Cys-267 with Cys-271. Residue Asp-276 is part of the active site. A disulfide bridge links Cys-310 with Cys-343.

It belongs to the peptidase A1 family.

Its subcellular location is the secreted. The enzyme catalyses Preferential cleavage: hydrophobic, preferably aromatic, residues in P1 and P1' positions. Cleaves 1-Phe-|-Val-2, 4-Gln-|-His-5, 13-Glu-|-Ala-14, 14-Ala-|-Leu-15, 15-Leu-|-Tyr-16, 16-Tyr-|-Leu-17, 23-Gly-|-Phe-24, 24-Phe-|-Phe-25 and 25-Phe-|-Tyr-26 bonds in the B chain of insulin.. Its function is as follows. Shows particularly broad specificity; although bonds involving phenylalanine and leucine are preferred, many others are also cleaved to some extent. This chain is Pepsin II-1, found in Oryctolagus cuniculus (Rabbit).